A 258-amino-acid polypeptide reads, in one-letter code: Distal membrane-arm assembly complex protein 2 (258 aa).

The protein belongs to the ATP synthase subunit s family. As to quaternary structure, interacts with incompletely assembled mitochondrial NADH:ubiquinone oxidoreductase complex (complex I).

It localises to the mitochondrion. Functionally, required for the assembly of the mitochondrial NADH:ubiquinone oxidoreductase complex (complex I). Involved in the assembly of the distal region of complex I. This is Distal membrane-arm assembly complex protein 2 (Dmac2) from Mus musculus (Mouse).